The primary structure comprises 151 residues: Ubiquitin-conjugating enzyme E2 2 (151 aa).

Positions 1-26 are disordered; that stretch reads MSTSARRRLMRDFKRMQTDPPAGVSA. The region spanning 4-150 is the UBC core domain; that stretch reads SARRRLMRDF…VRETVEKSWE (147 aa). C88 acts as the Glycyl thioester intermediate in catalysis.

The protein belongs to the ubiquitin-conjugating enzyme family.

It localises to the cytoplasm. Its subcellular location is the nucleus. It catalyses the reaction S-ubiquitinyl-[E1 ubiquitin-activating enzyme]-L-cysteine + [E2 ubiquitin-conjugating enzyme]-L-cysteine = [E1 ubiquitin-activating enzyme]-L-cysteine + S-ubiquitinyl-[E2 ubiquitin-conjugating enzyme]-L-cysteine.. It functions in the pathway protein modification; protein ubiquitination. Its function is as follows. Catalyzes the covalent attachment of ubiquitin to other proteins. Plays a role in transcription regulation by catalyzing the monoubiquitination of histone H2B to form H2BK123ub1. H2BK123ub1 gives a specific tag for epigenetic transcriptional activation and is also a prerequisite for H3K4me and H3K79me formation. Also involved in postreplication repair of UV-damaged DNA, in N-end rule-dependent protein degradation and in sporulation. The polypeptide is Ubiquitin-conjugating enzyme E2 2 (uvsJ) (Emericella nidulans (strain FGSC A4 / ATCC 38163 / CBS 112.46 / NRRL 194 / M139) (Aspergillus nidulans)).